The chain runs to 339 residues: uncharacterized protein (339 aa).

The N-terminal stretch at 1–29 is a signal peptide; that stretch reads MIKQVCKNITICSLALSTALTVFPASSYA.

Belongs to the aerolysin family.

This is an uncharacterized protein from Staphylococcus aureus (strain MRSA252).